A 306-amino-acid chain; its full sequence is Mitochondrial brown fat uncoupling protein 1 (306 aa).

At 1–10 (MVGTTATDVA) the chain is on the mitochondrial intermembrane side. Residues 11–32 (PTMGVKIFSAGVAACLADVITF) form a helical membrane-spanning segment. Solcar repeat units follow at residues 11 to 102 (PTMG…VQEF), 110 to 200 (PSLR…MKGA), and 209 to 294 (DDVP…LKRE). Topologically, residues 33 to 73 (PLDTAKVRLQIQGECQTTSGIRYKGVLGTITTLAKTEGPLK) are mitochondrial matrix. Lysine 56 provides a ligand contact to fatty acid 16:0. A helical membrane pass occupies residues 74–96 (LYSGLPAGLQRQISFASLRIGLY). Residues 97-115 (DTVQEFWGGEEATPSLRSK) are Mitochondrial intermembrane-facing. Residues 116–132 (ICAGLTTGGVAVFIGQP) traverse the membrane as a helical segment. Residues 133 to 177 (TEVVKVRLQAQSHLHGLKPRYTGTYNAYRIIATTESLSTLWKGTT) lie on the Mitochondrial matrix side of the membrane. A helical transmembrane segment spans residues 178-194 (PNLLRNIIINCTELVTY). The Mitochondrial intermembrane portion of the chain corresponds to 195–211 (DLMKGALVRNDILADDV). A helical membrane pass occupies residues 212–231 (PCHLLSALIAGFCTTLLSSP). Over 232-265 (VDVVKTRFINSPQGQYTSVPSCAMSMLTKEGPTA) the chain is Mitochondrial matrix. Residue cysteine 253 is modified to Cysteine sulfenic acid (-SOH). The helical transmembrane segment at 266–288 (FFKGFAPSFLRLASWNVIMFVCF) threads the bilayer. Lysine 268 is a fatty acid 16:0 binding site. The Mitochondrial intermembrane segment spans residues 289–306 (EKLKRELMKSRQTVDCAT).

It belongs to the mitochondrial carrier (TC 2.A.29) family. As to quaternary structure, most probably functions as a monomer. Binds one purine nucleotide per monomer. However, has also been suggested to function as a homodimer or a homotetramer. Tightly associates with cardiolipin in the mitochondrion inner membrane; may stabilize and regulate its activity. May undergo sulfenylation upon cold exposure. May increase the sensitivity of UCP1 thermogenic function to the activation by noradrenaline probably through structural effects. In terms of processing, may undergo ubiquitin-mediated proteasomal degradation.

Its subcellular location is the mitochondrion inner membrane. It catalyses the reaction H(+)(in) = H(+)(out). Has no constitutive proton transporter activity and has to be activated by long-chain fatty acids/LCFAs. Inhibited by purine nucleotides. Both purine nucleotides and LCFAs bind the cytosolic side of the transporter and directly compete to activate or inhibit it. Activated by noradrenaline and reactive oxygen species. Despite lacking canonical translational encoding for selenocysteine, a small pool of the protein has been observed to selectively incorporate selenocysteine at 'Cys-253'. Selenocysteine-modified protein is highly sensitive to redox modification and may constitute a pool of protein highly sensitive to activation by elevated levels of reactive oxygen species (ROS). Mitochondrial protein responsible for thermogenic respiration, a specialized capacity of brown adipose tissue and beige fat that participates in non-shivering adaptive thermogenesis to temperature and diet variations and more generally to the regulation of energy balance. Functions as a long-chain fatty acid/LCFA and proton symporter, simultaneously transporting one LCFA and one proton through the inner mitochondrial membrane. However, LCFAs remaining associated with the transporter via their hydrophobic tails, it results in an apparent transport of protons activated by LCFAs. Thereby, dissipates the mitochondrial proton gradient and converts the energy of substrate oxydation into heat instead of ATP. Regulates the production of reactive oxygen species/ROS by mitochondria. The polypeptide is Mitochondrial brown fat uncoupling protein 1 (Ochotona dauurica (Daurian pika)).